A 176-amino-acid chain; its full sequence is Isopentenyl-diphosphate Delta-isomerase (176 aa).

Mn(2+) contacts are provided by His-22 and His-28. The region spanning 26–160 is the Nudix hydrolase domain; that stretch reads LRHKAVSVFV…PDRYTPWLRI (135 aa). Cys-62 is a catalytic residue. His-64 lines the Mn(2+) pocket. Glu-82 is a Mg(2+) binding site. 2 residues coordinate Mn(2+): Glu-108 and Glu-110. Glu-110 is an active-site residue.

It belongs to the IPP isomerase type 1 family. Mg(2+) is required as a cofactor. Mn(2+) serves as cofactor.

It localises to the cytoplasm. The enzyme catalyses isopentenyl diphosphate = dimethylallyl diphosphate. It functions in the pathway isoprenoid biosynthesis; dimethylallyl diphosphate biosynthesis; dimethylallyl diphosphate from isopentenyl diphosphate: step 1/1. The protein operates within porphyrin-containing compound metabolism; chlorophyll biosynthesis. Catalyzes the 1,3-allylic rearrangement of the homoallylic substrate isopentenyl (IPP) to its highly electrophilic allylic isomer, dimethylallyl diphosphate (DMAPP). The sequence is that of Isopentenyl-diphosphate Delta-isomerase from Roseobacter denitrificans (strain ATCC 33942 / OCh 114) (Erythrobacter sp. (strain OCh 114)).